The chain runs to 448 residues: uncharacterized protein (448 aa).

Residue 257 to 264 (GRNAQGKT) participates in ATP binding.

This is an uncharacterized protein from Methanocaldococcus jannaschii (strain ATCC 43067 / DSM 2661 / JAL-1 / JCM 10045 / NBRC 100440) (Methanococcus jannaschii).